We begin with the raw amino-acid sequence, 406 residues long: Immediate early response gene 5-like protein (406 aa).

2 disordered regions span residues 166-195 (QPPH…APAA) and 216-235 (AAPS…PSSS). Over residues 182 to 193 (QPGPAPLPPPAP) the composition is skewed to pro residues.

Belongs to the IER family.

In Mus musculus (Mouse), this protein is Immediate early response gene 5-like protein (Ier5l).